Reading from the N-terminus, the 498-residue chain is Polyphosphate:AMP phosphotransferase (498 aa).

2 PPK2 regions span residues 11-234 (IDDD…MQAA) and 269-491 (LSKE…LEKA).

This sequence belongs to the polyphosphate kinase 2 (PPK2) family. Class II subfamily.

It catalyses the reaction [phosphate](n) + ADP = [phosphate](n+1) + AMP. Functionally, uses inorganic polyphosphate (polyP) as a donor to convert AMP to ADP. Can also convert GMP to GDP, with lower efficiency. The polypeptide is Polyphosphate:AMP phosphotransferase (Pseudomonas syringae pv. tomato (strain ATCC BAA-871 / DC3000)).